Reading from the N-terminus, the 162-residue chain is Non-specific lipid transfer protein GPI-anchored 27 (162 aa).

The N-terminal stretch at 1–29 (MAYTNKVAVAVGAAVVFLAVVMNPRWTEA) is a signal peptide. 4 disulfides stabilise this stretch: Cys-39–Cys-78, Cys-50–Cys-62, Cys-63–Cys-102, and Cys-76–Cys-110. A glycan (N-linked (GlcNAc...) asparagine) is linked at Asn-68. Residues Asn-124 and Asn-135 are each glycosylated (N-linked (GlcNAc...) asparagine). Ser-137 carries the GPI-anchor amidated serine lipid modification. The propeptide at 138-162 (VGGKNKVATSMSAFGLVAILLFVMF) is removed in mature form.

Belongs to the plant LTP family.

Its subcellular location is the cell membrane. Its function is as follows. Probable lipid transfer protein. The protein is Non-specific lipid transfer protein GPI-anchored 27 of Arabidopsis thaliana (Mouse-ear cress).